Here is a 798-residue protein sequence, read N- to C-terminus: MARYPVFTFVFLICLVLCTNAQQGGTECLKANAKSCGECIQAGPNCGWCTKVDFLQEGEPTSARCDDLAALKTKGCPEDDIQNPRGRKQKLKDIPITSKGKGERMDPANITQLRPQQLVFELRSGEPQTFNLTFRRAEDYPIDLYYLMDLSFSMKDDLENVKSLGTALMTEMEKITSDFRIGFGSFVEKTVMPYISTTPAKLLNPCTNDQNCTSPFSYKNVLNLTKDGKLFNDLVGKQQISGNLDSPEGGFDAIMQVAVCGEQIGWRNVTRLLVFSTDAGFHFAGDGKLGGIVLPNDGRCHLHGNMYTMSHYYDYPSIAHLVQKLSENNIQTIFAVTEDFQPVYQELKNLIPKSAVGTLSSNSSNVIQLIIDSYNSLSSELILENSKLPEGVTISYRSFCKNGVKGTGEDGRKCSNISIGDQVEFEISVTAHKCPKKGQAESIKIKPLGFNEEVEIVLQFICECDCQDKGTPNSPECHFGNGTFECGACRCNEGRIGKECECSTDEVNSEDMDAYCRRENSSEICSNNGDCICGQCVCKKRDNPNEVYSGKYCECDNFNCDRSNGLICGGKGVCKCRVCECFPNYSGSACDCSEDTSTCMAKNGQICNGRGICDCGRCKCTDPKFQGPTCELCQTCVGVCTEHKECVQCRAFQKGEKQDVCMEQCMHFNISLVDSREELPQPGQAEALTHCKEKDAEDCWFYFTYSVDSKNEVMVHVVKEPECPSGPDIIPIVAGVVAGIVLIGLALLLIWKLLMIIHDRREFAKFEKEKMNAKWDTGENPIYKSAVATVVNPKYEGK.

The N-terminal stretch at 1–21 is a signal peptide; sequence MARYPVFTFVFLICLVLCTNA. Residues 22-727 lie on the Extracellular side of the membrane; sequence QQGGTECLKA…VKEPECPSGP (706 aa). Positions 27–77 constitute a PSI domain; sequence ECLKANAKSCGECIQAGPNCGWCTKVDFLQEGEPTSARCDDLAALKTKGCP. 28 disulfides stabilise this stretch: cysteine 28–cysteine 46, cysteine 36–cysteine 464, cysteine 39–cysteine 65, cysteine 49–cysteine 76, cysteine 206–cysteine 212, cysteine 260–cysteine 300, cysteine 400–cysteine 414, cysteine 434–cysteine 462, cysteine 466–cysteine 486, cysteine 477–cysteine 489, cysteine 491–cysteine 500, cysteine 502–cysteine 533, cysteine 516–cysteine 531, cysteine 525–cysteine 536, cysteine 538–cysteine 553, cysteine 555–cysteine 576, cysteine 560–cysteine 574, cysteine 568–cysteine 579, cysteine 581–cysteine 590, cysteine 592–cysteine 615, cysteine 599–cysteine 613, cysteine 607–cysteine 618, cysteine 620–cysteine 630, cysteine 633–cysteine 636, cysteine 640–cysteine 691, cysteine 646–cysteine 665, cysteine 649–cysteine 661, and cysteine 699–cysteine 723. The segment at 77–106 is disordered; it reads PEDDIQNPRGRKQKLKDIPITSKGKGERMD. 2 N-linked (GlcNAc...) asparagine glycosylation sites follow: asparagine 109 and asparagine 131. In terms of domain architecture, VWFA spans 139–377; the sequence is DYPIDLYYLM…QLIIDSYNSL (239 aa). Positions 151 and 153 each coordinate Mg(2+). Serine 153, aspartate 156, aspartate 157, and glutamate 188 together coordinate Ca(2+). N-linked (GlcNAc...) asparagine glycans are attached at residues asparagine 211 and asparagine 223. Residues asparagine 243, aspartate 245, proline 247, and glutamate 248 each contribute to the Ca(2+) site. Glutamate 248 is a Mg(2+) binding site. 2 N-linked (GlcNAc...) asparagine glycosylation sites follow: asparagine 268 and asparagine 362. Asparagine 416 carries an N-linked (GlcNAc...) asparagine glycan. 4 consecutive I-EGF domains span residues 466 to 501, 502 to 554, 555 to 591, and 592 to 631; these read CQDKGTPNSPECHFGNGTFECGACRCNEGRIGKECE, CSTD…KYCE, CDNFNCDRSNGLICGGKGVCKCRVCECFPNYSGSACD, and CSEDTSTCMAKNGQICNGRGICDCGRCKCTDPKFQGPTCE. N-linked (GlcNAc...) asparagine glycosylation is present at asparagine 481. Asparagine 520 is a glycosylation site (N-linked (GlcNAc...) asparagine). N-linked (GlcNAc...) asparagine glycosylation occurs at asparagine 584. An N-linked (GlcNAc...) asparagine glycan is attached at asparagine 669. A helical membrane pass occupies residues 728-751; the sequence is DIIPIVAGVVAGIVLIGLALLLIW. Residues 752–798 are Cytoplasmic-facing; sequence KLLMIIHDRREFAKFEKEKMNAKWDTGENPIYKSAVATVVNPKYEGK. A Phosphotyrosine modification is found at tyrosine 783.

This sequence belongs to the integrin beta chain family. As to quaternary structure, heterodimer of an alpha and a beta subunit.

Its subcellular location is the cell membrane. The protein localises to the cell projection. It localises to the invadopodium membrane. The protein resides in the ruffle membrane. It is found in the melanosome. Its subcellular location is the cleavage furrow. The protein localises to the lamellipodium. It localises to the ruffle. In terms of biological role, beta integrins associate with alpha subunits to form receptor complexes that recognize the sequence R-G-D in a wide array of ligands. May be involved in osteoblast compaction. May play role in myoblast differentiation and fusion during skeletal myogenesis. This chain is Integrin beta-1-B (itgb1-b), found in Xenopus laevis (African clawed frog).